A 215-amino-acid chain; its full sequence is MTATVIFDLDGTLVNTEALYLKSNVKAAAVLGLHRTEADFRPLVGSAGPSEAKIIADLVGADHAAWFQQFSTQDVLDQIRSGADFVLPGADKTLQTLDQMGYRLALATSSAKHYVDVVLAATGWVKRFDPILTGSDVTAHKPDPEIYHVMKTKLPETPAIVVEDTHVGVAAAEGAGLPVVMIPGIGQGPDHKATAILAAAITDLPDWLQNHPTFA.

It belongs to the HAD-like hydrolase superfamily. CbbY/CbbZ/Gph/YieH family.

This is an uncharacterized protein from Lacticaseibacillus casei (Lactobacillus casei).